The primary structure comprises 705 residues: Elongation factor G (705 aa).

Residues 8–290 (AYYRNIGISA…AVIEYLPAPT (283 aa)) enclose the tr-type G domain. GTP contacts are provided by residues 17 to 24 (AHIDAGKT), 88 to 92 (DTPGH), and 142 to 145 (NKMD).

It belongs to the TRAFAC class translation factor GTPase superfamily. Classic translation factor GTPase family. EF-G/EF-2 subfamily.

The protein resides in the cytoplasm. Its function is as follows. Catalyzes the GTP-dependent ribosomal translocation step during translation elongation. During this step, the ribosome changes from the pre-translocational (PRE) to the post-translocational (POST) state as the newly formed A-site-bound peptidyl-tRNA and P-site-bound deacylated tRNA move to the P and E sites, respectively. Catalyzes the coordinated movement of the two tRNA molecules, the mRNA and conformational changes in the ribosome. This is Elongation factor G from Baumannia cicadellinicola subsp. Homalodisca coagulata.